The primary structure comprises 827 residues: Cell surface glycoprotein (827 aa).

A signal peptide spans Met-1–Ala-34. Asn-47 carries N-linked (Glc...) asparagine glycosylation. The segment covering Pro-73–Leu-102 has biased composition (polar residues). Residues Pro-73 to Gly-111 are disordered. N-linked (Glc...) asparagine glycosylation is found at Asn-117, Asn-308, Asn-313, Asn-532, and Asn-766. Residues Ser-755–Pro-804 are disordered. Residues Thr-761–Thr-787 show a composition bias toward low complexity. The short motif at Pro-804–Phe-806 is the PGF sorting signal element. A helical transmembrane segment spans residues Pro-804 to Leu-823.

The protein belongs to the halobacterial S-layer protein family. In terms of processing, O-glycosylated on 4 to 6 threonine residues; glycans consist of Glc-Gal disaccharides. The N-terminus is not blocked. Post-translationally, cleaved by the archaeosortase ArtA at the C-terminus, with removal of a short hydrophobic segment. In terms of processing, lipidation: Following protein translocation across the membrane, the protein is modified by a derivative of mevalonic acid. Lipid modification is ArtA-dependent and requires the conserved C-terminal PGF motif. Asn-47 and Asn-117 are glycosylated by a pentasaccharide comprising a hexose, 2 hexuronic acids, a methyl ester of a hexuronic acid and mannose. The pentasaccharide is produced in 2 steps: first, a tetrasaccharide is built on dolichol-P and then transferred to the S-layer glycoprotein. Then, the mannose fifth sugar is attached to a distinct molecule of dolichol-P and is transferred to the protein already carrying the tetrasaccharide. The pentasaccharide on Asn-47 was initially thought to contain mannose, galactose, glucose and idose with a relative ratio of 1/3/3/0.2. However, it was later shown that it is not the case. Under low-salt conditions (1.75 M instead of 3.4 M), a tetrasaccharide consisting of a sulfated hexose, 2 hexoses and rhamnose is attached to Asn-532.

The protein resides in the secreted. The protein localises to the cell wall. It is found in the S-layer. It localises to the cell membrane. S-layer protein. The S-layer is a paracrystalline mono-layered assembly of proteins which coat the surface of the cell. This chain is Cell surface glycoprotein (csg), found in Haloferax volcanii (strain ATCC 29605 / DSM 3757 / JCM 8879 / NBRC 14742 / NCIMB 2012 / VKM B-1768 / DS2) (Halobacterium volcanii).